A 186-amino-acid chain; its full sequence is UPF0301 protein Saro_0683 (186 aa).

The protein belongs to the UPF0301 (AlgH) family.

The polypeptide is UPF0301 protein Saro_0683 (Novosphingobium aromaticivorans (strain ATCC 700278 / DSM 12444 / CCUG 56034 / CIP 105152 / NBRC 16084 / F199)).